Reading from the N-terminus, the 140-residue chain is UPF0102 protein ACIAD1132 (140 aa).

The protein belongs to the UPF0102 family.

The protein is UPF0102 protein ACIAD1132 of Acinetobacter baylyi (strain ATCC 33305 / BD413 / ADP1).